Consider the following 275-residue polypeptide: T-cell ecto-ADP-ribosyltransferase 2 (275 aa).

A signal peptide spans 1–20 (MPSNICKFFLTWWLIQQVTG). Disulfide bonds link Cys-41–Cys-243 and Cys-141–Cys-193. Positions 61–238 (AKLKVAWEEA…IFLDSPKRKK (178 aa)) constitute a TR mART core domain. Residues Tyr-98, Arg-146, and Gln-164 each coordinate NAD(+). Residue Arg-146 is part of the active site. Ser-167 is an active-site residue. Ser-202 serves as a coordination point for NAD(+). An ADP-ribosylarginine; by autocatalysis modification is found at Arg-204. Glu-209 is an active-site residue. Ser-246 carries GPI-anchor amidated serine lipidation. Residues 247 to 275 (SAGARESCVSLFLVVLPSLLVQLLCLAEP) constitute a propeptide, removed in mature form.

Belongs to the Arg-specific ADP-ribosyltransferase family. Postthymic T-cells.

It is found in the cell membrane. The catalysed reaction is L-arginyl-[protein] + NAD(+) = N(omega)-(ADP-D-ribosyl)-L-arginyl-[protein] + nicotinamide + H(+). The enzyme catalyses NAD(+) + H2O = ADP-D-ribose + nicotinamide + H(+). Its function is as follows. Has both NAD(+) glycohydrolase and ADP-ribosyltransferase activity (to a lesser extent). In Rattus norvegicus (Rat), this protein is T-cell ecto-ADP-ribosyltransferase 2 (Art2b).